The following is a 329-amino-acid chain: uncharacterized protein (329 aa).

The tract at residues 284–303 (SGGGHSEAGGLNAPYDKSKS) is disordered.

This is an uncharacterized protein from Methanocaldococcus jannaschii (strain ATCC 43067 / DSM 2661 / JAL-1 / JCM 10045 / NBRC 100440) (Methanococcus jannaschii).